A 399-amino-acid polypeptide reads, in one-letter code: Delta(12) acyl-lipid conjugase (11E,13E-forming) (399 aa).

Residues 11 to 30 (RNGGGPKKKMGPGQGLGPGE) form a disordered region. A run of 2 helical transmembrane segments spans residues 61–81 (FSYLLSDIALVSAFYYVADTY) and 93–113 (LAWPVYWFCQGAVLTGMWGIA). The Histidine box-1 motif lies at 114–118 (HDCGH). Residues 126–146 (LVDDVVGFLIHSLVFVPYFSF) traverse the membrane as a helical segment. The Histidine box-2 signature appears at 150–154 (HRRHH). The next 3 helical transmembrane spans lie at 188 to 208 (VFIIFITLTLGWPMYLTFNIS), 232 to 252 (VLVHISNAGLVATGYLLYRIA), and 258 to 278 (GWLIRLYGVPLIVLNACVVLI). The short motif at 325–329 (HVVHH) is the Histidine box-3 element.

It belongs to the fatty acid desaturase type 1 family. As to expression, expressed in developing seeds, but not in leaves.

It localises to the membrane. The enzyme catalyses a (9Z,12Z)-octadecadienoyl-containing glycerolipid + 2 Fe(II)-[cytochrome b5] + O2 + 2 H(+) = a (9Z,11E,13E)-octadecatrienoyl-containing glycerolipid + 2 Fe(III)-[cytochrome b5] + 2 H2O. It catalyses the reaction (9Z,12Z,15Z)-octadecatrienoyl-containing glycerolipid + 2 Fe(II)-[cytochrome b5] + O2 + 2 H(+) = a (9Z,11E,13E,15Z)-octadecatetraenoyl-containing glycerolipid + 2 Fe(III)-[cytochrome b5] + 2 H2O. The protein operates within lipid metabolism; polyunsaturated fatty acid biosynthesis. In terms of biological role, converts linoleic acid to alpha-eleostearic acid (18:3(9Z,11E,13E)) and alpha-linolenic acid to alpha-parinaric acid (18:4(9Z,11E, 13E, 15Z)). Converts a single cis double bond at carbon 12 to two conjugated trans bonds at positions 11 and 13. The chain is Delta(12) acyl-lipid conjugase (11E,13E-forming) from Momordica charantia (Bitter gourd).